A 119-amino-acid chain; its full sequence is uncharacterized protein (119 aa).

The helical transmembrane segment at 80 to 104 (VFPLVYLFCVVFQFLSLGCYLSIFF) threads the bilayer.

It localises to the membrane. This is an uncharacterized protein from Saccharomyces cerevisiae (strain ATCC 204508 / S288c) (Baker's yeast).